We begin with the raw amino-acid sequence, 204 residues long: Tic20 family protein Ycf60 (204 aa).

The next 4 membrane-spanning stretches (helical) occupy residues 5–25 (LPSLIIIMLTTFSIILISFII), 87–107 (LMPLVIFYVTHPTLAVIIFFI), 133–153 (ILLFLINSLLGATFRALPIEF), and 159–179 (GLMMCNTLFWFVLSTISYSII).

It belongs to the Tic20 family.

The protein resides in the plastid. Its subcellular location is the chloroplast membrane. This is Tic20 family protein Ycf60 (ycf60) from Gracilaria tenuistipitata var. liui (Red alga).